The sequence spans 338 residues: Ketol-acid reductoisomerase (NADP(+)) (338 aa).

Residues 1 to 181 (MKVYYDKDAD…GGTKGGVIET (181 aa)) enclose the KARI N-terminal Rossmann domain. Residues 24–27 (YGSQ), Arg-47, and Ser-52 each bind NADP(+). The active site involves His-107. Gly-133 is an NADP(+) binding site. In terms of domain architecture, KARI C-terminal knotted spans 182-327 (NFREETETDL…GQLRDMMPWI (146 aa)). Mg(2+)-binding residues include Asp-190, Glu-194, Glu-226, and Glu-230. Position 251 (Ser-251) interacts with substrate.

The protein belongs to the ketol-acid reductoisomerase family. The cofactor is Mg(2+).

It catalyses the reaction (2R)-2,3-dihydroxy-3-methylbutanoate + NADP(+) = (2S)-2-acetolactate + NADPH + H(+). It carries out the reaction (2R,3R)-2,3-dihydroxy-3-methylpentanoate + NADP(+) = (S)-2-ethyl-2-hydroxy-3-oxobutanoate + NADPH + H(+). The protein operates within amino-acid biosynthesis; L-isoleucine biosynthesis; L-isoleucine from 2-oxobutanoate: step 2/4. It participates in amino-acid biosynthesis; L-valine biosynthesis; L-valine from pyruvate: step 2/4. Functionally, involved in the biosynthesis of branched-chain amino acids (BCAA). Catalyzes an alkyl-migration followed by a ketol-acid reduction of (S)-2-acetolactate (S2AL) to yield (R)-2,3-dihydroxy-isovalerate. In the isomerase reaction, S2AL is rearranged via a Mg-dependent methyl migration to produce 3-hydroxy-3-methyl-2-ketobutyrate (HMKB). In the reductase reaction, this 2-ketoacid undergoes a metal-dependent reduction by NADPH to yield (R)-2,3-dihydroxy-isovalerate. The sequence is that of Ketol-acid reductoisomerase (NADP(+)) from Aromatoleum aromaticum (strain DSM 19018 / LMG 30748 / EbN1) (Azoarcus sp. (strain EbN1)).